The sequence spans 412 residues: Multidrug resistance protein MdtA (412 aa).

An N-terminal signal peptide occupies residues 1 to 21 (MKGSNIRRWGAALAVVIIAGA). Disordered regions lie at residues 33–53 (GSGAPAAGQGPQGPGGARHGR) and 389–412 (VVTASSGEQAQPAPRQSGKHGARS).

This sequence belongs to the membrane fusion protein (MFP) (TC 8.A.1) family. As to quaternary structure, part of a tripartite efflux system composed of MdtA, MdtB and MdtC.

The protein resides in the cell inner membrane. The sequence is that of Multidrug resistance protein MdtA from Klebsiella pneumoniae subsp. pneumoniae (strain ATCC 700721 / MGH 78578).